Here is a 259-residue protein sequence, read N- to C-terminus: Probable dihydroorotate dehydrogenase B (NAD(+)), electron transfer subunit (259 aa).

Residues 1-89 (MLPLNATITQ…RGPFGKGFTL (89 aa)) form the FAD-binding FR-type domain. [2Fe-2S] cluster-binding residues include Cys-211, Cys-216, Cys-219, and Cys-229.

It belongs to the PyrK family. Heterotetramer of 2 PyrK and 2 PyrD type B subunits. It depends on [2Fe-2S] cluster as a cofactor. Requires FAD as cofactor.

It participates in pyrimidine metabolism; UMP biosynthesis via de novo pathway; orotate from (S)-dihydroorotate (NAD(+) route): step 1/1. Its function is as follows. Responsible for channeling the electrons from the oxidation of dihydroorotate from the FMN redox center in the PyrD type B subunit to the ultimate electron acceptor NAD(+). The chain is Probable dihydroorotate dehydrogenase B (NAD(+)), electron transfer subunit from Methanosarcina mazei (strain ATCC BAA-159 / DSM 3647 / Goe1 / Go1 / JCM 11833 / OCM 88) (Methanosarcina frisia).